The following is a 290-amino-acid chain: Cilia- and flagella-associated protein 298 (290 aa).

This sequence belongs to the CFAP298 family. Interacts with ZMYND10. In terms of tissue distribution, expressed in the trachea (at protein level).

The protein resides in the cytoplasm. It localises to the cytoskeleton. Its subcellular location is the cilium basal body. Its function is as follows. Plays a role in motile cilium function, possibly by acting on outer dynein arm assembly. Seems to be important for initiation rather than maintenance of cilium motility. Required for correct positioning of cilia at the apical cell surface, suggesting an additional role in the planar cell polarity (PCP) pathway. May suppress canonical Wnt signaling activity. This Rattus norvegicus (Rat) protein is Cilia- and flagella-associated protein 298.